Consider the following 362-residue polypeptide: Dihydroorotate dehydrogenase (quinone) (362 aa).

FMN-binding positions include 62–66 and T86; that span reads AGYDK. K66 provides a ligand contact to substrate. 111–115 serves as a coordination point for substrate; the sequence is NRLGF. Residues N139 and N170 each coordinate FMN. Residue N170 coordinates substrate. S173 (nucleophile) is an active-site residue. A substrate-binding site is contributed by N175. 2 residues coordinate FMN: K215 and S243. Residue 244–245 coordinates substrate; sequence NT. Residues G266, G295, and 316 to 317 contribute to the FMN site; that span reads YS.

The protein belongs to the dihydroorotate dehydrogenase family. Type 2 subfamily. In terms of assembly, monomer. It depends on FMN as a cofactor.

Its subcellular location is the cell membrane. It catalyses the reaction (S)-dihydroorotate + a quinone = orotate + a quinol. The protein operates within pyrimidine metabolism; UMP biosynthesis via de novo pathway; orotate from (S)-dihydroorotate (quinone route): step 1/1. Catalyzes the conversion of dihydroorotate to orotate with quinone as electron acceptor. The polypeptide is Dihydroorotate dehydrogenase (quinone) (Rhizobium etli (strain CIAT 652)).